A 186-amino-acid chain; its full sequence is Casparian strip membrane protein 1 (186 aa).

The Cytoplasmic portion of the chain corresponds to Met1–Ser26. The chain crosses the membrane as a helical span at residues Val27–Met47. Over Gly48–Arg74 the chain is Extracellular. The helical transmembrane segment at Leu75–Ile95 threads the bilayer. The Cytoplasmic segment spans residues Leu96–Arg107. A helical transmembrane segment spans residues Val108–Ala128. Residues Ala129–Ser161 lie on the Extracellular side of the membrane. A helical membrane pass occupies residues Leu162 to Val182. Topologically, residues Leu183–Arg186 are cytoplasmic.

Belongs to the Casparian strip membrane proteins (CASP) family. In terms of assembly, homodimer and heterodimers.

The protein resides in the cell membrane. Its function is as follows. Regulates membrane-cell wall junctions and localized cell wall deposition. Required for establishment of the Casparian strip membrane domain (CSD) and the subsequent formation of Casparian strips, a cell wall modification of the root endodermis that determines an apoplastic barrier between the intraorganismal apoplasm and the extraorganismal apoplasm and prevents lateral diffusion. In Lotus japonicus (Lotus corniculatus var. japonicus), this protein is Casparian strip membrane protein 1.